The following is a 54-amino-acid chain: Large ribosomal subunit protein bL33 (54 aa).

This sequence belongs to the bacterial ribosomal protein bL33 family.

The sequence is that of Large ribosomal subunit protein bL33 from Corynebacterium diphtheriae (strain ATCC 700971 / NCTC 13129 / Biotype gravis).